We begin with the raw amino-acid sequence, 192 residues long: SPbeta prophage-derived uncharacterized protein YokK (192 aa).

The protein is SPbeta prophage-derived uncharacterized protein YokK (yokK) of Bacillus subtilis (strain 168).